Reading from the N-terminus, the 159-residue chain is Small ribosomal subunit protein uS4 (159 aa).

The 53-residue stretch at 106 to 158 (RRLQTIVYRMGLAKSIHHARQLIVHGHVAVAGRRVTSPGFLVPRELEDKISLI) folds into the S4 RNA-binding domain.

Belongs to the universal ribosomal protein uS4 family. Part of the 30S ribosomal subunit. Contacts protein S5. The interaction surface between S4 and S5 is involved in control of translational fidelity.

Its function is as follows. One of the primary rRNA binding proteins, it binds directly to 16S rRNA where it nucleates assembly of the body of the 30S subunit. Functionally, with S5 and S12 plays an important role in translational accuracy. The chain is Small ribosomal subunit protein uS4 from Pyrobaculum aerophilum (strain ATCC 51768 / DSM 7523 / JCM 9630 / CIP 104966 / NBRC 100827 / IM2).